Here is a 188-residue protein sequence, read N- to C-terminus: Transmembrane protein 160 (188 aa).

The transit peptide at 1 to 96 (MGGGWWWARA…ISFMQSDMGR (96 aa)) directs the protein to the mitochondrion. The disordered stretch occupies residues 25–52 (PPRPRSGGARGSFAPGHGPRAGASPPPV). Positions 29 to 38 (RSGGARGSFA) are enriched in low complexity. Phosphoserine is present on Ser48. The next 2 membrane-spanning stretches (helical) occupy residues 102–122 (FFLLGGLCVVWGGASYVVGLA) and 135–155 (AAAGVGAVLAAGLLWACAVGL).

Belongs to the TMEM160 family.

Its subcellular location is the mitochondrion inner membrane. The chain is Transmembrane protein 160 from Bos taurus (Bovine).